Consider the following 342-residue polypeptide: Holliday junction branch migration complex subunit RuvB (342 aa).

The segment at 1-22 is disordered; it reads MTLKPVREVSPGSQEGEERLEQ. Residues 1–185 are large ATPase domain (RuvB-L); it reads MTLKPVREVS…FPIQERLGYY (185 aa). Residues L24, R25, G66, K69, T70, S71, 132 to 134, R175, Y185, and R222 each bind ATP; that span reads EDY. Position 70 (T70) interacts with Mg(2+). The small ATPAse domain (RuvB-S) stretch occupies residues 186–256; that stretch reads EPTELREIAV…IVETTLERLE (71 aa). Residues 259–342 are head domain (RuvB-H); the sequence is GRGLDAMDRR…RPQGKQGSLI (84 aa). DNA contacts are provided by R295, R314, and R319.

Belongs to the RuvB family. Homohexamer. Forms an RuvA(8)-RuvB(12)-Holliday junction (HJ) complex. HJ DNA is sandwiched between 2 RuvA tetramers; dsDNA enters through RuvA and exits via RuvB. An RuvB hexamer assembles on each DNA strand where it exits the tetramer. Each RuvB hexamer is contacted by two RuvA subunits (via domain III) on 2 adjacent RuvB subunits; this complex drives branch migration. In the full resolvosome a probable DNA-RuvA(4)-RuvB(12)-RuvC(2) complex forms which resolves the HJ.

It localises to the cytoplasm. It carries out the reaction ATP + H2O = ADP + phosphate + H(+). The RuvA-RuvB-RuvC complex processes Holliday junction (HJ) DNA during genetic recombination and DNA repair, while the RuvA-RuvB complex plays an important role in the rescue of blocked DNA replication forks via replication fork reversal (RFR). RuvA specifically binds to HJ cruciform DNA, conferring on it an open structure. The RuvB hexamer acts as an ATP-dependent pump, pulling dsDNA into and through the RuvAB complex. RuvB forms 2 homohexamers on either side of HJ DNA bound by 1 or 2 RuvA tetramers; 4 subunits per hexamer contact DNA at a time. Coordinated motions by a converter formed by DNA-disengaged RuvB subunits stimulates ATP hydrolysis and nucleotide exchange. Immobilization of the converter enables RuvB to convert the ATP-contained energy into a lever motion, pulling 2 nucleotides of DNA out of the RuvA tetramer per ATP hydrolyzed, thus driving DNA branch migration. The RuvB motors rotate together with the DNA substrate, which together with the progressing nucleotide cycle form the mechanistic basis for DNA recombination by continuous HJ branch migration. Branch migration allows RuvC to scan DNA until it finds its consensus sequence, where it cleaves and resolves cruciform DNA. The sequence is that of Holliday junction branch migration complex subunit RuvB from Anaeromyxobacter sp. (strain Fw109-5).